Consider the following 178-residue polypeptide: Large ribosomal subunit protein uL6 (178 aa).

It belongs to the universal ribosomal protein uL6 family. As to quaternary structure, part of the 50S ribosomal subunit.

Its function is as follows. This protein binds to the 23S rRNA, and is important in its secondary structure. It is located near the subunit interface in the base of the L7/L12 stalk, and near the tRNA binding site of the peptidyltransferase center. This chain is Large ribosomal subunit protein uL6, found in Corynebacterium jeikeium (strain K411).